Here is a 110-residue protein sequence, read N- to C-terminus: DNA-directed RNA polymerase subunit omega (110 aa).

The protein belongs to the RNA polymerase subunit omega family. As to quaternary structure, the RNAP catalytic core consists of 2 alpha, 1 beta, 1 beta' and 1 omega subunit. When a sigma factor is associated with the core the holoenzyme is formed, which can initiate transcription.

The enzyme catalyses RNA(n) + a ribonucleoside 5'-triphosphate = RNA(n+1) + diphosphate. In terms of biological role, promotes RNA polymerase assembly. Latches the N- and C-terminal regions of the beta' subunit thereby facilitating its interaction with the beta and alpha subunits. This Mycobacterium bovis (strain ATCC BAA-935 / AF2122/97) protein is DNA-directed RNA polymerase subunit omega (rpoZ).